A 418-amino-acid chain; its full sequence is Tyrosine--tRNA ligase (418 aa).

Tyr-34 provides a ligand contact to L-tyrosine. A 'HIGH' region motif is present at residues 39–48; sequence PTADSLHLGH. The L-tyrosine site is built by Tyr-169 and Gln-173. Residues 229 to 233 carry the 'KMSKS' region motif; it reads KFGKS. Residue Lys-232 participates in ATP binding. An S4 RNA-binding domain is found at 352–418; sequence HNIVEILVAA…GKKKYAVLTY (67 aa).

It belongs to the class-I aminoacyl-tRNA synthetase family. TyrS type 1 subfamily. As to quaternary structure, homodimer.

The protein localises to the cytoplasm. It catalyses the reaction tRNA(Tyr) + L-tyrosine + ATP = L-tyrosyl-tRNA(Tyr) + AMP + diphosphate + H(+). Its function is as follows. Catalyzes the attachment of tyrosine to tRNA(Tyr) in a two-step reaction: tyrosine is first activated by ATP to form Tyr-AMP and then transferred to the acceptor end of tRNA(Tyr). The sequence is that of Tyrosine--tRNA ligase from Streptococcus pyogenes serotype M1.